Reading from the N-terminus, the 184-residue chain is UPF0301 protein Sden_2674 (184 aa).

The protein belongs to the UPF0301 (AlgH) family.

This Shewanella denitrificans (strain OS217 / ATCC BAA-1090 / DSM 15013) protein is UPF0301 protein Sden_2674.